Here is a 157-residue protein sequence, read N- to C-terminus: Large ribosomal subunit protein eL24 (157 aa).

Residues 95–157 (NQKPEVRKAQ…VSAPRVGGKR (63 aa)) are disordered. Over residues 96–117 (QKPEVRKAQREQAIRAAKEAKK) the composition is skewed to basic and acidic residues. A compositionally biased stretch (low complexity) spans 123 to 145 (KKQTTQSSKAPAKSAQKQKIAKP).

This sequence belongs to the eukaryotic ribosomal protein eL24 family. As to quaternary structure, component of the large ribosomal subunit.

The protein resides in the cytoplasm. Its function is as follows. Component of the large ribosomal subunit. The ribosome is a large ribonucleoprotein complex responsible for the synthesis of proteins in the cell. Plays an essential role in early embryonic development. This is Large ribosomal subunit protein eL24 (rpl24) from Danio rerio (Zebrafish).